Consider the following 166-residue polypeptide: Transcription antitermination protein NusB (166 aa).

Residues 1 to 18 (MISDESDRFNPRDPKPAD) are compositionally biased toward basic and acidic residues. Residues 1 to 30 (MISDESDRFNPRDPKPADAGKPSKSAKRRE) form a disordered region.

This sequence belongs to the NusB family.

Involved in transcription antitermination. Required for transcription of ribosomal RNA (rRNA) genes. Binds specifically to the boxA antiterminator sequence of the ribosomal RNA (rrn) operons. The polypeptide is Transcription antitermination protein NusB (Pseudomonas fluorescens (strain Pf0-1)).